The following is a 1217-amino-acid chain: ATP-dependent helicase/nuclease subunit A (1217 aa).

The 466-residue stretch at 10–475 (VIWTDAQWQS…IDLSQNFRSR (466 aa)) folds into the UvrD-like helicase ATP-binding domain. 31 to 38 (AAAGSGKT) provides a ligand contact to ATP. The 311-residue stretch at 476–786 (KEVLSTTNYI…RMMTIHSSKG (311 aa)) folds into the UvrD-like helicase C-terminal domain.

Belongs to the helicase family. AddA subfamily. As to quaternary structure, heterodimer of AddA and AddB/RexB. Mg(2+) is required as a cofactor.

The enzyme catalyses Couples ATP hydrolysis with the unwinding of duplex DNA by translocating in the 3'-5' direction.. It carries out the reaction ATP + H2O = ADP + phosphate + H(+). The heterodimer acts as both an ATP-dependent DNA helicase and an ATP-dependent, dual-direction single-stranded exonuclease. Recognizes the chi site generating a DNA molecule suitable for the initiation of homologous recombination. The AddA nuclease domain is required for chi fragment generation; this subunit has the helicase and 3' -&gt; 5' nuclease activities. The chain is ATP-dependent helicase/nuclease subunit A from Staphylococcus aureus (strain USA300).